Here is a 1481-residue protein sequence, read N- to C-terminus: Cystic fibrosis transmembrane conductance regulator (1481 aa).

Residues 1 to 77 (MQRSPLEKAS…KLINALRRCF (77 aa)) are Cytoplasmic-facing. A helical membrane pass occupies residues 78-98 (FWRFMFYGIILYLGEVTKAVQ). An ABC transmembrane type-1 1 domain is found at 81-365 (FMFYGIILYL…WAVQTWYDSL (285 aa)). At 99 to 122 (PLLLGRIIASYDPDNEAERSIAIY) the chain is on the extracellular side. The chain crosses the membrane as a helical span at residues 123 to 146 (LGIGLCLLFIVRTLLLHPAIFGLH). At 147 to 195 (HIGMQMRIAMFSLIYKKTLKLSSRVLDKISIGQLVSLLSNNLNKFDEGL) the chain is on the cytoplasmic side. The chain crosses the membrane as a helical span at residues 196–216 (ALAHFVWIAPLQVTLLMGLLW). Topologically, residues 217 to 222 (DLLQAS) are extracellular. Residues 223–243 (AFCGLAFLIVLALFQAGLGRM) form a helical membrane-spanning segment. At 244–298 (MMKYRDQRAGKINERLVITSEMIENIQSVKAYCWEEAMEKMIENLRQTELKLTRK) the chain is on the cytoplasmic side. The helical transmembrane segment at 299-319 (AAYVRYFNSSAFFFSGFFVVF) threads the bilayer. Topologically, residues 320–339 (LSVLPYALIKGIVLRRIFTT) are extracellular. A helical membrane pass occupies residues 340-358 (ISFCIVLRMAVTRQFPWAV). The Cytoplasmic portion of the chain corresponds to 359 to 858 (QTWYDSLGAI…YLRYITIHKS (500 aa)). ATP contacts are provided by residues Trp-401, Ser-433, 457 to 464 (GSTGAGKT), and Gln-492. Residues 422 to 645 (NGDNSLFFSN…RPDFSSKLMG (224 aa)) enclose the ABC transporter 1 domain. The S-palmitoyl cysteine moiety is linked to residue Cys-523. Phosphoserine occurs at positions 548 and 659. Positions 653–831 (SAERRNSILT…EEINEDDLKE (179 aa)) are disordered R region. A Phosphoserine; by PKA modification is found at Ser-669. Residue Ser-685 is modified to Phosphoserine. Lys-687 is covalently cross-linked (Glycyl lysine isopeptide (Lys-Gly) (interchain with G-Cter in ubiquitin)). Phosphoserine is present on residues Ser-699 and Ser-711. Thr-716 carries the phosphothreonine modification. 5 positions are modified to phosphoserine: Ser-736, Ser-767, Ser-790, Ser-795, and Ser-813. Residues 859–879 (LIFVLIWCLVIFLAEVAASLV) form a helical membrane-spanning segment. Residues 859-1155 (LIFVLIWCLV…AVNSSIDVDS (297 aa)) form the ABC transmembrane type-1 2 domain. The Extracellular portion of the chain corresponds to 880–918 (VLWLLKETPPQDSGNSTKGANNSYAVIITSTSSYYVFYI). Asn-894 and Asn-900 each carry an N-linked (GlcNAc...) asparagine glycan. A discontinuously helical transmembrane segment spans residues 919–939 (YVGVADTLLALGLFRGLPLVH). Over 940–990 (TLITVSKILHHKMLHSVLQAPMSTLNTLKAGGILNRFSKDMAILDDLLPLT) the chain is Cytoplasmic. A helical transmembrane segment spans residues 991–1011 (IFDFIQLLLIVIGAVAVVSVL). The Extracellular segment spans residues 1012–1013 (QP). The helical transmembrane segment at 1014-1034 (YIFLATVPVIAAFIILRAYFL) threads the bilayer. The Cytoplasmic portion of the chain corresponds to 1035–1095 (HTSQQLKQLE…TANWFLYLST (61 aa)). The helical transmembrane segment at 1096–1116 (LRWFQMRIEMIFVIFFIAVTF) threads the bilayer. Topologically, residues 1117–1130 (ISILTTGEGEGTVG) are extracellular. A helical membrane pass occupies residues 1131-1151 (IILTLAMNIMSTLQWAVNSSI). Residues 1152 to 1481 (DVDSLMRSVS…TEEEVQETRL (330 aa)) are Cytoplasmic-facing. The ABC transporter 2 domain occupies 1211 to 1444 (MTVKDLTAKY…KSLFQQAISS (234 aa)). Residues Tyr-1220 and 1245-1252 (GRTGSGKS) contribute to the ATP site. Residues 1387–1481 (RTLKQAFADC…TEEEVQETRL (95 aa)) form an interaction with GORASP2 region. A lipid anchor (S-palmitoyl cysteine) is attached at Cys-1396. Residues Ser-1445 and Ser-1457 each carry the phosphoserine modification. Residues 1449–1481 (KLFPHRNSSKHKSRSKIAALQEETEEEVQETRL) are disordered. A compositionally biased stretch (basic residues) spans 1451-1463 (FPHRNSSKHKSRS). Positions 1470–1481 (EETEEEVQETRL) are enriched in acidic residues. Residues 1479–1481 (TRL) carry the PDZ-binding motif.

Belongs to the ABC transporter superfamily. ABCC family. CFTR transporter (TC 3.A.1.202) subfamily. As to quaternary structure, monomer; does not require oligomerization for channel activity. May form oligomers in the membrane. Interacts with SLC26A3, SLC26A6 and NHERF1. Interacts with SHANK2. Interacts with MYO6. Interacts (via C-terminus) with GOPC (via PDZ domain); this promotes CFTR internalization and thereby decreases channel activity. Interacts with SLC4A7 through NHERF1. Found in a complex with MYO5B and RAB11A. Interacts with ANO1. Interacts with SLC26A8. Interacts with AHCYL1; the interaction increases CFTR activity. Interacts with CSE1L. The core-glycosylated form interacts with GORASP2 (via PDZ GRASP-type 1 domain) in respone to ER stress. Interacts with MARCHF2; the interaction leads to CFTR ubiqtuitination and degradation. Interacts with ADGRG2. In terms of processing, N-glycosylated. Phosphorylated; cAMP treatment promotes phosphorylation and activates the channel. Dephosphorylation decreases the ATPase activity (in vitro). Phosphorylation at PKA sites activates the channel. Phosphorylation at PKC sites enhances the response to phosphorylation by PKA. Phosphorylated by AMPK; this inhibits channel activity. Post-translationally, ubiquitinated, leading to its degradation in the lysosome. Deubiquitination by USP10 in early endosomes enhances its endocytic recycling to the cell membrane. Ubiquitinated by RNF185 during ER stress. Ubiquitinated by MARCHF2.

It is found in the apical cell membrane. The protein localises to the early endosome membrane. It localises to the cell membrane. The protein resides in the recycling endosome membrane. Its subcellular location is the endoplasmic reticulum membrane. It is found in the nucleus. The enzyme catalyses ATP + H2O + closed Cl(-) channel = ADP + phosphate + open Cl(-) channel.. The catalysed reaction is chloride(in) = chloride(out). It catalyses the reaction hydrogencarbonate(in) = hydrogencarbonate(out). It carries out the reaction ATP + H2O = ADP + phosphate + H(+). In terms of biological role, epithelial ion channel that plays an important role in the regulation of epithelial ion and water transport and fluid homeostasis. Mediates the transport of chloride ions across the cell membrane. Possesses an intrinsic ATPase activity and utilizes ATP to gate its channel; the passive flow of anions through the channel is gated by cycles of ATP binding and hydrolysis by the ATP-binding domains. The ion channel is also permeable to HCO(3)(-); selectivity depends on the extracellular chloride concentration. Exerts its function also by modulating the activity of other ion channels and transporters. Contributes to the regulation of the pH and the ion content of the epithelial fluid layer. Modulates the activity of the epithelial sodium channel (ENaC) complex, in part by regulating the cell surface expression of the ENaC complex. May regulate bicarbonate secretion and salvage in epithelial cells by regulating the transporter SLC4A7. Can inhibit the chloride channel activity of ANO1. Plays a role in the chloride and bicarbonate homeostasis during sperm epididymal maturation and capacitation. The chain is Cystic fibrosis transmembrane conductance regulator from Equus caballus (Horse).